A 434-amino-acid chain; its full sequence is MRLARLLRGGTSVRPLCAVPCASRSLASDSASGSGPASESGVPGQVDFYARFSPSPLSMKQFLDFGSVNACEKTSFMFLRQELPVRLANIMKEISLLPDNLLRTPSVQLVQSWYIQSLQELLDFKDKSAEDAKTIYEFTDTVIRIRNRHNDVIPTMAQGVTEYKESFGVDPVTSQNVQYFLDRFYMSRISIRMLLNQHSLLFGGKGSPSHRKHIGSINPNCDVVEVIKDGYENARRLCDLYYVNSPELELEELNAKSPGQPIQVVYVPSHLYHMVFELFKNAMRATMEHHADKGVYPPIQVHVTLGEEDLTVKMSDRGGGVPLRKIDRLFNYMYSTAPRPRVETSRAVPLAGFGYGLPISRLYAQYFQGDLKLYSLEGYGTDAVIYIKALSTESIERLPVYNKAAWKHYRTNHEADDWCVPSREPKDMTTFRSS.

The N-terminal 26 residues, 1 to 26 (MRLARLLRGGTSVRPLCAVPCASRSL), are a transit peptide targeting the mitochondrion. The residue at position 136 (Tyr136) is a Phosphotyrosine; by FGFR1. Positions 161–391 (TEYKESFGVD…DAVIYIKALS (231 aa)) constitute a Histidine kinase domain. Tyr241 is modified (phosphotyrosine; by FGFR1, ABL1, FLT3 and JAK2). Tyr242 is modified (phosphotyrosine; by FGFR1). ATP-binding positions include 277 to 284 (ELFKNAMR), Asp316, 335 to 336 (ST), and 352 to 357 (GFGYGL). Residue Thr336 is modified to Phosphothreonine. N6-succinyllysine is present on Lys403.

It belongs to the PDK/BCKDK protein kinase family. In terms of assembly, homodimer, and heterodimer with PDK2. Interacts with the pyruvate dehydrogenase complex subunit DLAT, and is part of the multimeric pyruvate dehydrogenase complex that contains multiple copies of pyruvate dehydrogenase (E1), dihydrolipoamide acetyltransferase (DLAT, E2) and lipoamide dehydrogenase (DLD, E3). Interacts with phosphoglycerate kinase PGK1; the interaction is direct, occurs under hypoxic conditions and leads to PDK1-mediated inhibition of pyruvate dehydrogenase complex activity. Phosphorylated by constitutively activated ABL1, FGFR1, FLT3 and JAK2 (in vitro), and this may also occur in cancer cells that express constitutively activated ABL1, FGFR1, FLT3 and JAK2. Phosphorylation at Tyr-241 and Tyr-242 strongly increases kinase activity, while phosphorylation at Tyr-136 has a lesser effect. Phosphorylated under hypoxic conditions at Thr-336 by phosphoglycerate kinase PGK1 which has an activating effect. Detected in pancreas islets (at protein level). Expressed predominantly in the heart.

It is found in the mitochondrion matrix. The enzyme catalyses L-seryl-[pyruvate dehydrogenase E1 alpha subunit] + ATP = O-phospho-L-seryl-[pyruvate dehydrogenase E1 alpha subunit] + ADP + H(+). Activated by binding to the pyruvate dehydrogenase complex subunit DLAT. Strongly activated by NADH plus acetyl-coenzyme A. Inhibited by dichloroacetate. Its function is as follows. Kinase that plays a key role in regulation of glucose and fatty acid metabolism and homeostasis via phosphorylation of the pyruvate dehydrogenase subunits PDHA1 and PDHA2. This inhibits pyruvate dehydrogenase activity, and thereby regulates metabolite flux through the tricarboxylic acid cycle, down-regulates aerobic respiration and inhibits the formation of acetyl-coenzyme A from pyruvate. Plays an important role in cellular responses to hypoxia and is important for cell proliferation under hypoxia. This chain is [Pyruvate dehydrogenase (acetyl-transferring)] kinase isozyme 1, mitochondrial (Pdk1), found in Rattus norvegicus (Rat).